A 345-amino-acid chain; its full sequence is MSNQRSSLKHLNTFALPAYASNVISAGSVETLIAAWHESKAKRQPVLLLGEGSNVLFIKNFSGTVLLNRIMGITSTEDSAAWYLHVGAGENWHQLVCHSLQNNMPGLENLALIPGCVGSAPIQNIGAYGVELKQVCEYVDLLDMDKGTIQRISAEECQFGYRDSIFKHRYGNGFAIVSVGIKLMKSWTPTLGYGDLIHMDPLTVTATDIFNSVCTMRRSKLPDPMVTGNAGSFFKNPVVSAAIAEEIVHCYPNAPHYLQPDGSVKLAAGWLIDQCSLKGYQIGGAAVHQQQALVLINQSEATGQDVIHLARYIRQQVAQRFSIWLEPEVRFIADNGEVNAVEHLS.

The region spanning 16 to 186 (LPAYASNVIS…VSVGIKLMKS (171 aa)) is the FAD-binding PCMH-type domain. Residue Arg-162 is part of the active site. Ser-232 (proton donor) is an active-site residue. Glu-328 is an active-site residue.

It belongs to the MurB family. The cofactor is FAD.

Its subcellular location is the cytoplasm. The enzyme catalyses UDP-N-acetyl-alpha-D-muramate + NADP(+) = UDP-N-acetyl-3-O-(1-carboxyvinyl)-alpha-D-glucosamine + NADPH + H(+). Its pathway is cell wall biogenesis; peptidoglycan biosynthesis. In terms of biological role, cell wall formation. The chain is UDP-N-acetylenolpyruvoylglucosamine reductase from Yersinia pestis.